The following is a 369-amino-acid chain: MRFSFLSGIRDLFRHFIISAASGALSDRLGWVWGAIAKVFSGSVWLRYKIAKPPHQVQATVVSVGNIVVGGTGKTPLVLWLAQALNERGISCAVLSRGYKGKCSQRKSFTIVDPALHTAACVGDEPLLLAKHLPAGTVRIQKDRKALAEKSAGAFDVLLLDDGFQCNRLHKDVEIVLVNGSDPFGGRAFFPKGRLRDFPERLAKANYVIVNGKCSPSDQRELDLLNPAAKILVEPQISEIVWLNKSANMPRDHWEGLGVGVFCGLGFPKGFLTMLRNAGIHVLGTHLLPDHSGITKQELELFCKKIILRQGVGILCTEKDSVKIEAFAEEMSLPIGEVRMRFSCVCNEERMVAMLDAIEAIQKNKKVTT.

68–75 contacts ATP; the sequence is VVGGTGKT.

Belongs to the LpxK family.

It catalyses the reaction a lipid A disaccharide + ATP = a lipid IVA + ADP + H(+). It participates in glycolipid biosynthesis; lipid IV(A) biosynthesis; lipid IV(A) from (3R)-3-hydroxytetradecanoyl-[acyl-carrier-protein] and UDP-N-acetyl-alpha-D-glucosamine: step 6/6. Its function is as follows. Transfers the gamma-phosphate of ATP to the 4'-position of a tetraacyldisaccharide 1-phosphate intermediate (termed DS-1-P) to form tetraacyldisaccharide 1,4'-bis-phosphate (lipid IVA). This chain is Tetraacyldisaccharide 4'-kinase, found in Chlamydia muridarum (strain MoPn / Nigg).